Consider the following 258-residue polypeptide: Histidine/lysine/arginine/ornithine transport ATP-binding protein HisP (258 aa).

The ABC transporter domain maps to 7 to 253; sequence LHVIDLHKRY…PQSPRLQQFL (247 aa). ATP contacts are provided by Ser-41, Gly-42, Gly-44, Lys-45, Ser-46, and Thr-47.

This sequence belongs to the ABC transporter superfamily. The HisPMQJ complex is composed of two ATP-binding proteins (HisP), two transmembrane proteins (HisM and HisQ) and a solute-binding protein (HisJ). The HisPMQ-ArgT complex is composed of two ATP-binding proteins (HisP), two transmembrane proteins (HisM and HisQ) and a solute-binding protein (ArgT).

It is found in the cell inner membrane. It carries out the reaction a polar amino acid(out) + ATP + H2O = a polar amino acid(in) + ADP + phosphate + H(+). The enzyme catalyses L-histidine(out) + ATP + H2O = L-histidine(in) + ADP + phosphate + H(+). The catalysed reaction is L-lysine(out) + ATP + H2O = L-lysine(in) + ADP + phosphate + H(+). It catalyses the reaction L-arginine(out) + ATP + H2O = L-arginine(in) + ADP + phosphate + H(+). It carries out the reaction L-ornithine(out) + ATP + H2O = L-ornithine(in) + ADP + phosphate + H(+). Its activity is regulated as follows. Isolated, soluble HisP has a very low ATPase activity. ATPase activity is slightly increased in the presence of HisM and HisQ, and strongly increased when HisJ is also present. Functionally, part of the ABC transporter complex HisPMQJ involved in histidine transport. Is also part of the ABC transporter complex HisPMQ-ArgT involved in lysine/arginine/ornithine transport. Shows ATPase activity. Responsible for energy coupling to the transport system. In Salmonella typhimurium (strain LT2 / SGSC1412 / ATCC 700720), this protein is Histidine/lysine/arginine/ornithine transport ATP-binding protein HisP.